An 83-amino-acid chain; its full sequence is Consomatin Rs1 (83 aa).

A signal peptide spans 1-22 (MQTAYWVMVMMMVWITAPLSEG). A propeptide spanning residues 23–55 (GKLNNVIRGLVPDDVTPKRISQSLISRRRFDSR) is cleaved from the precursor. A disulfide bridge connects residues C62 and C67. W64 carries the post-translational modification D-tryptophan. Residue P68 is modified to 4-hydroxyproline. The propeptide occupies 71–83 (LHGDNYDLKEKDK).

The protein belongs to the conotoxin C superfamily. Consomatin family. As to expression, expressed by the venom duct.

It localises to the secreted. Its function is as follows. Moderately activates human somatostatin receptors (SSTR) with a preferential activation of SSTR1 and SSTR4. In vivo, does not cause behavioral changes in mice within a few minutes of intracranial injection, but causes a progressive loss of movement thereafter. Four to five hours after injection, mice recover, even with the highest dose tested. Shows antinociception and antihyperalgesia activities in two mouse models of acute pain, most probably by acting outside the central nervous system. The polypeptide is Consomatin Rs1 (Conus raulsilvai (Sea snail)).